The chain runs to 189 residues: dCTP deaminase (189 aa).

DCTP contacts are provided by residues 112–117, 136–138, Q157, Y171, and Q181; these read KSTYAR and TLE. The active-site Proton donor/acceptor is E138.

The protein belongs to the dCTP deaminase family. In terms of assembly, homotrimer.

It carries out the reaction dCTP + H2O + H(+) = dUTP + NH4(+). It functions in the pathway pyrimidine metabolism; dUMP biosynthesis; dUMP from dCTP (dUTP route): step 1/2. Its function is as follows. Catalyzes the deamination of dCTP to dUTP. The chain is dCTP deaminase from Halorhodospira halophila (strain DSM 244 / SL1) (Ectothiorhodospira halophila (strain DSM 244 / SL1)).